A 427-amino-acid polypeptide reads, in one-letter code: Enolase (427 aa).

(2R)-2-phosphoglycerate is bound at residue Q163. E205 functions as the Proton donor in the catalytic mechanism. Mg(2+) contacts are provided by D242, E285, and D312. The (2R)-2-phosphoglycerate site is built by K337, R366, S367, and K388. The active-site Proton acceptor is K337.

It belongs to the enolase family. Mg(2+) serves as cofactor.

Its subcellular location is the cytoplasm. It localises to the secreted. The protein resides in the cell surface. It catalyses the reaction (2R)-2-phosphoglycerate = phosphoenolpyruvate + H2O. It participates in carbohydrate degradation; glycolysis; pyruvate from D-glyceraldehyde 3-phosphate: step 4/5. Catalyzes the reversible conversion of 2-phosphoglycerate (2-PG) into phosphoenolpyruvate (PEP). It is essential for the degradation of carbohydrates via glycolysis. The chain is Enolase from Azorhizobium caulinodans (strain ATCC 43989 / DSM 5975 / JCM 20966 / LMG 6465 / NBRC 14845 / NCIMB 13405 / ORS 571).